A 353-amino-acid chain; its full sequence is Dimethylsulfoniopropionate lyase 2 (353 aa).

Catalysis depends on proton donor/acceptor residues Cys125 and Cys274. Residues 326–353 form a disordered region; that stretch reads DPNETDVSKGRPTKAEHRFGPEFEEMLQ. Residues 331–346 show a composition bias toward basic and acidic residues; that stretch reads DVSKGRPTKAEHRFGP.

The protein belongs to the aspartate/glutamate racemases family. ALMA1 subfamily. As to quaternary structure, homotetramer.

It carries out the reaction S,S-dimethyl-beta-propiothetin = acrylate + dimethyl sulfide + H(+). Mediates cleavage of dimethylsulfoniopropionate (DMSP) into dimethyl sulfide (DMS) and acrylate. DMS is the principal form by which sulfur is transported from oceans to the atmosphere and is a key component of the ocean sulfur cycle. This is Dimethylsulfoniopropionate lyase 2 from Emiliania huxleyi (strain CCMP1516).